A 393-amino-acid chain; its full sequence is Digeranylgeranylglycerophospholipid reductase (393 aa).

Residues Ala14, Asp33, Cys44, Ala45, Gly47, Arg100, Ala124, Asp280, Gly292, and Ile293 each coordinate FAD.

This sequence belongs to the geranylgeranyl reductase family. DGGGPL reductase subfamily. It depends on FAD as a cofactor.

It carries out the reaction a 2,3-bis-O-phytanyl-sn-glycerol 1-phospholipid + 8 A = a 2,3-bis-O-(geranylgeranyl)-sn-glycerol 1-phospholipid + 8 AH2. The catalysed reaction is 2,3-bis-O-(phytanyl)-sn-glycerol 1-phosphate + 8 A = 2,3-bis-O-(geranylgeranyl)-sn-glycerol 1-phosphate + 8 AH2. The enzyme catalyses CDP-2,3-bis-O-(geranylgeranyl)-sn-glycerol + 8 AH2 = CDP-2,3-bis-O-(phytanyl)-sn-glycerol + 8 A. It catalyses the reaction archaetidylserine + 8 AH2 = 2,3-bis-O-phytanyl-sn-glycero-3-phospho-L-serine + 8 A. The protein operates within membrane lipid metabolism; glycerophospholipid metabolism. Functionally, is involved in the reduction of 2,3-digeranylgeranylglycerophospholipids (unsaturated archaeols) into 2,3-diphytanylglycerophospholipids (saturated archaeols) in the biosynthesis of archaeal membrane lipids. Catalyzes the formation of archaetidic acid (2,3-di-O-phytanyl-sn-glyceryl phosphate) from 2,3-di-O-geranylgeranylglyceryl phosphate (DGGGP) via the hydrogenation of each double bond of the isoprenoid chains. Is also probably able to reduce double bonds of geranyl groups in CDP-2,3-bis-O-(geranylgeranyl)-sn-glycerol and archaetidylserine, thus acting at various stages in the biosynthesis of archaeal membrane lipids. This chain is Digeranylgeranylglycerophospholipid reductase, found in Methanobrevibacter smithii (strain ATCC 35061 / DSM 861 / OCM 144 / PS).